Here is a 294-residue protein sequence, read N- to C-terminus: Acetyl-coenzyme A carboxylase carboxyl transferase subunit beta (294 aa).

Residues 27 to 294 (LWHKCPSCDA…PSPVALPVTA (268 aa)) enclose the CoA carboxyltransferase N-terminal domain. 4 residues coordinate Zn(2+): cysteine 31, cysteine 34, cysteine 50, and cysteine 53. A C4-type zinc finger spans residues 31–53 (CPSCDAVLYRPELEKTLDVCPKC).

The protein belongs to the AccD/PCCB family. Acetyl-CoA carboxylase is a heterohexamer composed of biotin carboxyl carrier protein (AccB), biotin carboxylase (AccC) and two subunits each of ACCase subunit alpha (AccA) and ACCase subunit beta (AccD). It depends on Zn(2+) as a cofactor.

Its subcellular location is the cytoplasm. The enzyme catalyses N(6)-carboxybiotinyl-L-lysyl-[protein] + acetyl-CoA = N(6)-biotinyl-L-lysyl-[protein] + malonyl-CoA. It participates in lipid metabolism; malonyl-CoA biosynthesis; malonyl-CoA from acetyl-CoA: step 1/1. Component of the acetyl coenzyme A carboxylase (ACC) complex. Biotin carboxylase (BC) catalyzes the carboxylation of biotin on its carrier protein (BCCP) and then the CO(2) group is transferred by the transcarboxylase to acetyl-CoA to form malonyl-CoA. This chain is Acetyl-coenzyme A carboxylase carboxyl transferase subunit beta, found in Ectopseudomonas mendocina (strain ymp) (Pseudomonas mendocina).